We begin with the raw amino-acid sequence, 706 residues long: Choline transporter-like protein 2 (706 aa).

The Cytoplasmic portion of the chain corresponds to 1 to 33; that stretch reads MGKDSQNYYGKHGTPQKYDPTFKGPIYNRGCTD. Thr14 is modified (phosphothreonine). The helical transmembrane segment at 34-54 threads the bilayer; the sequence is VICCVLLFLAIVGYVAVGIIA. The Extracellular segment spans residues 55 to 232; that stretch reads WTHGDPRKVI…QIFEDYTVSW (178 aa). N-linked (GlcNAc...) asparagine glycosylation is found at Asn187 and Asn200. Residues 233–253 traverse the membrane as a helical segment; it reads YWIIIGLVIAMVLSLLFIVLL. Residues 254–256 are Cytoplasmic-facing; sequence RFL. The chain crosses the membrane as a helical span at residues 257–277; sequence AGIMVWVMIVMVILVLGYGIF. At 278 to 315 the chain is on the extracellular side; it reads HCYMEYSRLRGEAGSDVSLVDLGFQTDLRVYLHLRQTW. The chain crosses the membrane as a helical span at residues 316-336; that stretch reads MAFMIILSILEVVIILLLIFL. Residues 337 to 364 are Cytoplasmic-facing; the sequence is RKRILIAIALIKEASRAVGHVMCSLLYP. The chain crosses the membrane as a helical span at residues 365 to 385; the sequence is LVTFFLLCLCIAYWASTSVFL. The Extracellular segment spans residues 386–454; sequence STSNTAVYKV…LQIFNAFMFF (69 aa). Residue Asn417 is glycosylated (N-linked (GlcNAc...) asparagine). A helical transmembrane segment spans residues 455–477; the sequence is WLANFVLALGQVTLAGAFASYYW. Residues 478-504 lie on the Cytoplasmic side of the membrane; sequence AMRKPDDMPAFPLFSAFGRALRYHTGS. A helical transmembrane segment spans residues 505-525; sequence LAFGSLILAIVQIIRVMLEYL. Topologically, residues 526 to 563 are extracellular; that stretch reads DQRLKAAQNKFAKFLMVCLKCCFWCLEKFIKFLNRNAY. A helical transmembrane segment spans residues 564–584; the sequence is IMIAIYGTNFCTSARNAFFLL. At 585–599 the chain is on the cytoplasmic side; sequence MRNIIRVAVLDKVTD. A helical transmembrane segment spans residues 600-620; it reads FLFLLGKLLIVGSVGILAFFF. The Extracellular segment spans residues 621 to 638; that stretch reads FTHRIRIVQDTAPPLNYY. The chain crosses the membrane as a helical span at residues 639–659; the sequence is WVPILTVIIGSYLIAHGFFSV. Topologically, residues 660–706 are cytoplasmic; sequence YGMCVDTLFLCFLEDLERNDGSAERPYFMSSTLKKLLNKTNKKVAES.

Belongs to the CTL (choline transporter-like) family. Interacts with COCH. In terms of processing, glycosylated, glycosylation differs from tissue to tissue. The molecular mass of the mature glycosylated protein is highest in kidney, followed by lung, colon and spleen, then brain and tongue. In terms of tissue distribution, expressed at high levels in lung, colon, inner ear and spleen (at protein level). Progressively lower levels in brain, tongue, liver and kidney (at protein level). In the kidney, prominent expression in glomeruli in the lining of Bowman's capsule and on the mesangial cells adjacent to the vessels within the glomerulus (at protein level). Strongly expressed on the membranes of splenocytes and in lung parenchyme (at protein level). As to expression, expressed at higher levels than isoform 2 in colon, heart, kidney, lung, cochlea, tongue and muscle, as well as in the inner ear. Predominantly expressed in brain, liver and spleen.

It localises to the cell membrane. The protein localises to the mitochondrion outer membrane. The catalysed reaction is choline(out) + n H(+)(in) = choline(in) + n H(+)(out). It catalyses the reaction ethanolamine(out) + n H(+)(in) = ethanolamine(in) + n H(+)(out). Choline/H+ antiporter, mainly in mitochodria. Also acts as a low-affinity ethanolamine/H+ antiporter, regulating the supply of extracellular ethanolamine (Etn) for the CDP-Etn pathway, redistribute intracellular Etn and balance the CDP-Cho and CDP-Etn arms of the Kennedy pathway. The sequence is that of Choline transporter-like protein 2 (Slc44a2) from Mus musculus (Mouse).